A 281-amino-acid chain; its full sequence is 3-mercaptopyruvate sulfurtransferase (281 aa).

Rhodanese domains are found at residues 17–135 (DDPE…LLEE) and 165–278 (HENT…LPVE). Substrate is bound at residue Arg-179. The active-site Cysteine persulfide intermediate is Cys-238. The interval 238-244 (CGSGVTA) is substrate specificity.

Monomer.

The protein resides in the cytoplasm. The catalysed reaction is 2-oxo-3-sulfanylpropanoate + [thioredoxin]-dithiol = [thioredoxin]-disulfide + hydrogen sulfide + pyruvate + H(+). Catalyzes the transfer of sulfur from 3-mercaptopyruvate to a thiol-containing acceptor to form an intramolecular disulfide releasing hydrogen sulfide and pyruvate. May be involved in the enhancement of bacterial growth inhibition by serine. This chain is 3-mercaptopyruvate sulfurtransferase (sseA), found in Escherichia coli (strain K12).